The chain runs to 296 residues: Protoheme IX farnesyltransferase (296 aa).

A run of 9 helical transmembrane segments spans residues 13-33, 35-55, 84-104, 107-127, 132-152, 162-182, 208-228, 229-249, and 264-284; these read IIFG…KGII, YPLF…GCVF, VTLI…YIAA, LAMW…SLYM, VYGT…GYCA, LILL…IAIF, ITLY…VGYA, GYKY…MALR, and FVFS…DFSV.

It belongs to the UbiA prenyltransferase family. Protoheme IX farnesyltransferase subfamily.

Its subcellular location is the cell inner membrane. It catalyses the reaction heme b + (2E,6E)-farnesyl diphosphate + H2O = Fe(II)-heme o + diphosphate. It participates in porphyrin-containing compound metabolism; heme O biosynthesis; heme O from protoheme: step 1/1. Converts heme B (protoheme IX) to heme O by substitution of the vinyl group on carbon 2 of heme B porphyrin ring with a hydroxyethyl farnesyl side group. The sequence is that of Protoheme IX farnesyltransferase from Edwardsiella ictaluri (strain 93-146).